Reading from the N-terminus, the 302-residue chain is Protoheme IX farnesyltransferase (302 aa).

The next 9 helical transmembrane spans lie at Val-26–Val-46, Trp-48–Leu-68, Val-98–Asn-118, Leu-120–Leu-140, Ile-148–Gly-168, Ala-174–Val-194, Ile-221–Gly-241, Leu-244–Leu-264, and Ile-280–Leu-300.

This sequence belongs to the UbiA prenyltransferase family. Protoheme IX farnesyltransferase subfamily.

The protein resides in the cell inner membrane. It catalyses the reaction heme b + (2E,6E)-farnesyl diphosphate + H2O = Fe(II)-heme o + diphosphate. Its pathway is porphyrin-containing compound metabolism; heme O biosynthesis; heme O from protoheme: step 1/1. Its function is as follows. Converts heme B (protoheme IX) to heme O by substitution of the vinyl group on carbon 2 of heme B porphyrin ring with a hydroxyethyl farnesyl side group. This Alkalilimnicola ehrlichii (strain ATCC BAA-1101 / DSM 17681 / MLHE-1) protein is Protoheme IX farnesyltransferase.